The primary structure comprises 206 residues: N-(5'-phosphoribosyl)anthranilate isomerase (206 aa).

This sequence belongs to the TrpF family.

The catalysed reaction is N-(5-phospho-beta-D-ribosyl)anthranilate = 1-(2-carboxyphenylamino)-1-deoxy-D-ribulose 5-phosphate. The protein operates within amino-acid biosynthesis; L-tryptophan biosynthesis; L-tryptophan from chorismate: step 3/5. This is N-(5'-phosphoribosyl)anthranilate isomerase from Citrifermentans bemidjiense (strain ATCC BAA-1014 / DSM 16622 / JCM 12645 / Bem) (Geobacter bemidjiensis).